The sequence spans 454 residues: Protein odr-4 homolog (454 aa).

2 consecutive transmembrane segments (helical) span residues 82–102 and 432–452; these read MLPG…ELAN and IGVI…FHYF.

The protein belongs to the ODR-4 family.

The protein resides in the membrane. In terms of biological role, may play a role in the trafficking of a subset of G-protein coupled receptors. This Pongo abelii (Sumatran orangutan) protein is Protein odr-4 homolog (ODR4).